The chain runs to 461 residues: Cysteine--tRNA ligase (461 aa).

Cysteine 29 is a binding site for Zn(2+). Residues 31-41 carry the 'HIGH' region motif; it reads MTIYDLCHVGH. The Zn(2+) site is built by cysteine 213, histidine 238, and glutamate 242. A 'KMSKS' region motif is present at residues 274–278; it reads KMSKS. Lysine 277 contributes to the ATP binding site.

This sequence belongs to the class-I aminoacyl-tRNA synthetase family. In terms of assembly, monomer. Requires Zn(2+) as cofactor.

It is found in the cytoplasm. It carries out the reaction tRNA(Cys) + L-cysteine + ATP = L-cysteinyl-tRNA(Cys) + AMP + diphosphate. This chain is Cysteine--tRNA ligase, found in Methylibium petroleiphilum (strain ATCC BAA-1232 / LMG 22953 / PM1).